The following is a 124-amino-acid chain: Fluoride-specific ion channel FluC (124 aa).

A run of 4 helical transmembrane segments spans residues 1-21 (MFNL…RHLT), 35-55 (WGTM…IAIL), 66-86 (LFVA…SLDF), and 99-119 (FGYA…GLWL). Na(+) is bound by residues G74 and T77.

It belongs to the fluoride channel Fluc/FEX (TC 1.A.43) family.

It localises to the cell inner membrane. It catalyses the reaction fluoride(in) = fluoride(out). Its activity is regulated as follows. Na(+) is not transported, but it plays an essential structural role and its presence is essential for fluoride channel function. In terms of biological role, fluoride-specific ion channel. Important for reducing fluoride concentration in the cell, thus reducing its toxicity. This is Fluoride-specific ion channel FluC from Mesorhizobium japonicum (strain LMG 29417 / CECT 9101 / MAFF 303099) (Mesorhizobium loti (strain MAFF 303099)).